We begin with the raw amino-acid sequence, 341 residues long: Anthranilate phosphoribosyltransferase (341 aa).

5-phospho-alpha-D-ribose 1-diphosphate is bound by residues Gly-79, 82-83 (GD), Thr-87, 89-92 (NIST), 107-115 (KHGNRAVSS), and Ser-119. An anthranilate-binding site is contributed by Gly-79. A Mg(2+)-binding site is contributed by Ser-91. Asn-110 contributes to the anthranilate binding site. Arg-165 lines the anthranilate pocket. 2 residues coordinate Mg(2+): Asp-224 and Glu-225.

It belongs to the anthranilate phosphoribosyltransferase family. In terms of assembly, homodimer. The cofactor is Mg(2+).

It carries out the reaction N-(5-phospho-beta-D-ribosyl)anthranilate + diphosphate = 5-phospho-alpha-D-ribose 1-diphosphate + anthranilate. It participates in amino-acid biosynthesis; L-tryptophan biosynthesis; L-tryptophan from chorismate: step 2/5. Catalyzes the transfer of the phosphoribosyl group of 5-phosphorylribose-1-pyrophosphate (PRPP) to anthranilate to yield N-(5'-phosphoribosyl)-anthranilate (PRA). In Bacillus cereus (strain AH820), this protein is Anthranilate phosphoribosyltransferase.